The sequence spans 246 residues: Sensory transduction protein LytT (246 aa).

Residues 3–117 form the Response regulatory domain; the sequence is KVLVVDDEML…RIVQTLKKYK (115 aa). The HTH LytTR-type domain maps to 142 to 246; the sequence is LALPIEESIV…AKELKKLLRI (105 aa).

Post-translationally, phosphorylated by LytS.

It localises to the cytoplasm. Functionally, member of the two-component regulatory system LytS/LytT that probably regulates genes involved in cell wall metabolism. The sequence is that of Sensory transduction protein LytT (lytT) from Bacillus cereus (strain ATCC 14579 / DSM 31 / CCUG 7414 / JCM 2152 / NBRC 15305 / NCIMB 9373 / NCTC 2599 / NRRL B-3711).